Reading from the N-terminus, the 20-residue chain is Citrate synthase (20 aa).

This sequence belongs to the citrate synthase family. Homodimer.

It carries out the reaction oxaloacetate + acetyl-CoA + H2O = citrate + CoA + H(+). Its pathway is carbohydrate metabolism; tricarboxylic acid cycle; isocitrate from oxaloacetate: step 1/2. The chain is Citrate synthase from Populus euphratica (Euphrates poplar).